We begin with the raw amino-acid sequence, 275 residues long: Chlorophyll a-b binding protein 3, chloroplastic (275 aa).

A chlorophyll b-binding site is contributed by Trp-58. Phe-78, Ser-84, and Glu-102 together coordinate chlorophyll a. Positions 107, 142, 169, and 172 each coordinate chlorophyll b. Chlorophyll a-binding residues include Lys-226, Glu-227, Asn-230, Arg-232, Gln-244, and His-259. Residues Leu-233–Tyr-253 traverse the membrane as a helical segment.

This sequence belongs to the light-harvesting chlorophyll a/b-binding (LHC) protein family. As to quaternary structure, the LHC complex consists of chlorophyll a-b binding proteins. The cofactor is Binds at least 14 chlorophylls (8 Chl-a and 6 Chl-b) and carotenoids such as lutein and neoxanthin.. Photoregulated by reversible phosphorylation of its threonine residues.

The protein localises to the plastid. It is found in the chloroplast thylakoid membrane. In terms of biological role, the light-harvesting complex (LHC) functions as a light receptor, it captures and delivers excitation energy to photosystems with which it is closely associated. Functionally, may channel protons produced in the catalytic Mn center of water oxidation into the thylakoid lumen. In Pisum sativum (Garden pea), this protein is Chlorophyll a-b binding protein 3, chloroplastic.